The sequence spans 254 residues: Distal membrane-arm assembly complex protein 2 (254 aa).

Phosphoserine is present on Ser250.

The protein belongs to the ATP synthase subunit s family. In terms of assembly, interacts with incompletely assembled mitochondrial NADH:ubiquinone oxidoreductase complex (complex I).

Its subcellular location is the mitochondrion. Its function is as follows. Required for the assembly of the mitochondrial NADH:ubiquinone oxidoreductase complex (complex I). Involved in the assembly of the distal region of complex I. This is Distal membrane-arm assembly complex protein 2 from Rattus norvegicus (Rat).